The following is a 98-amino-acid chain: Alpha-elicitin capsicein (98 aa).

3 disulfide bridges follow: Cys3-Cys71, Cys27-Cys56, and Cys51-Cys95.

It belongs to the elicitin family.

Its subcellular location is the secreted. Its function is as follows. Induces local and distal defense responses (incompatible hypersensitive reaction) in plants from the solanaceae and cruciferae families. Elicits leaf necrosis and causes the accumulation of pathogenesis-related proteins. Might interact with the lipidic molecules of the plasma membrane. This Phytophthora capsici protein is Alpha-elicitin capsicein.